We begin with the raw amino-acid sequence, 337 residues long: Movement protein (337 aa).

The span at 1 to 11 shows a compositional bias: polar residues; the sequence is MAGLWRSNSTL. Disordered stretches follow at residues 1–24 and 273–337; these read MAGLWRSNSTLDVERGRNRTQTET and SVVR…VRQT.

The protein resides in the host cell junction. Its subcellular location is the host plasmodesma. Its function is as follows. Transports viral genome to neighboring plant cells directly through plasmosdesmata, without any budding. The movement protein allows efficient cell to cell propagation, by bypassing the host cell wall barrier. Acts by forming a tubular structure at the host plasmodesmata, enlarging it enough to allow free passage of virion capsids. The polypeptide is Movement protein (Olive latent virus 2 (isolate Italy) (OLV-2)).